The primary structure comprises 175 residues: MVKDIIKTVTFSCMLAGSMFVTCHVCAAGSVVNITGNVQDNTCDVDINSRNFDVSLGSYDSRQFTAAGDTTPASVFHVGLTSCGSAVRAVKLTFTGTPDNQEAGLIQINSINGARGVGIQLLDKDKHELKINVPTTIALMPGTQTIAFYARLKATYLPVKAGNVDAVVNFVLDYQ.

The N-terminal stretch at 1–27 (MVKDIIKTVTFSCMLAGSMFVTCHVCA) is a signal peptide. Cysteine 43 and cysteine 83 are joined by a disulfide.

Belongs to the fimbrial protein family.

The protein resides in the fimbrium. Fimbriae (also called pili), polar filaments radiating from the surface of the bacterium to a length of 0.5-1.5 micrometers and numbering 100-300 per cell, enable bacteria to colonize the epithelium of specific host organs. Functionally, a minor fimbrial subunit. This protein is necessary for full expression of S-specific binding. S-fimbrial adhesins enable pathogenic E.coli causing urinary-tract infections or newborn meningitis to attach to glycoproteins terminating with alpha-sialic acid-(2-3)-beta-Gal. This Escherichia coli O6:K15:H31 (strain 536 / UPEC) protein is S-fimbrial protein subunit SfaG (sfaG).